Reading from the N-terminus, the 842-residue chain is Squamosa promoter-binding-like protein 9 (842 aa).

Positions 1 to 18 are enriched in gly residues; that stretch reads MDAPGGGGGGGGGGGGVD. 3 disordered regions span residues 1-22, 59-97, and 140-168; these read MDAP…AGEP, ALLP…RVRK, and RKKP…TPAE. Residues 69 to 85 are compositionally biased toward low complexity; that stretch reads PAEAEAEAAGPASLPSS. The span at 146–162 shows a compositional bias: gly residues; sequence AGRGSGAAVGGSGGGAS. The segment at 168–245 adopts an SBP-type; atypical zinc-finger fold; it reads EMKCQVPGCE…ERHNKRRRRK (78 aa). 8 residues coordinate Zn(2+): cysteine 171, cysteine 176, cysteine 193, cysteine 196, cysteine 212, cysteine 215, histidine 219, and cysteine 231. The Bipartite nuclear localization signal motif lies at 228 to 244; the sequence is KRSCRRKLERHNKRRRR. Over residues 236-246 the composition is skewed to basic residues; sequence ERHNKRRRRKP. Positions 236–256 are disordered; it reads ERHNKRRRRKPDSKGILEKDI.

As to expression, ubiquitous.

The protein resides in the nucleus. Trans-acting factor that binds specifically to the consensus nucleotide sequence 5'-TNCGTACAA-3'. This Oryza sativa subsp. japonica (Rice) protein is Squamosa promoter-binding-like protein 9 (SPL9).